The chain runs to 173 residues: Adenine phosphoribosyltransferase (173 aa).

Belongs to the purine/pyrimidine phosphoribosyltransferase family. Homodimer.

Its subcellular location is the cytoplasm. The catalysed reaction is AMP + diphosphate = 5-phospho-alpha-D-ribose 1-diphosphate + adenine. It functions in the pathway purine metabolism; AMP biosynthesis via salvage pathway; AMP from adenine: step 1/1. In terms of biological role, catalyzes a salvage reaction resulting in the formation of AMP, that is energically less costly than de novo synthesis. The protein is Adenine phosphoribosyltransferase of Desulfosudis oleivorans (strain DSM 6200 / JCM 39069 / Hxd3) (Desulfococcus oleovorans).